Reading from the N-terminus, the 763-residue chain is Phosphoglycerol transferase I (763 aa).

Transmembrane regions (helical) follow at residues 4–19, 26–48, 76–98, and 105–127; these read LLSFALFLASVLIYAW, WWFAATLTVLGLFVVLNITLFAS, YILPGIGIVLGLTAVFGALGWIL, and PHHFGYSLLALLLALGSVDASPA.

The protein belongs to the OpgB family.

The protein resides in the cell inner membrane. It carries out the reaction a phosphatidylglycerol + a membrane-derived-oligosaccharide D-glucose = a 1,2-diacyl-sn-glycerol + a membrane-derived-oligosaccharide 6-(glycerophospho)-D-glucose.. It participates in glycan metabolism; osmoregulated periplasmic glucan (OPG) biosynthesis. Transfers a phosphoglycerol residue from phosphatidylglycerol to the membrane-bound nascent glucan backbones. This Escherichia coli O157:H7 protein is Phosphoglycerol transferase I.